The chain runs to 167 residues: Small ribosomal subunit protein uS9 (167 aa).

The segment at 1 to 41 (MNTEAVAPDVAEEEVLTSYTSESSASADDAPKKERPALTVS) is disordered. Polar residues predominate over residues 17–26 (TSYTSESSAS).

The protein belongs to the universal ribosomal protein uS9 family.

In Renibacterium salmoninarum (strain ATCC 33209 / DSM 20767 / JCM 11484 / NBRC 15589 / NCIMB 2235), this protein is Small ribosomal subunit protein uS9.